The primary structure comprises 142 residues: UPF0310 protein PYRAB08750 (142 aa).

Belongs to the UPF0310 family.

The sequence is that of UPF0310 protein PYRAB08750 from Pyrococcus abyssi (strain GE5 / Orsay).